Here is a 466-residue protein sequence, read N- to C-terminus: Ribulose bisphosphate carboxylase large chain (466 aa).

Lys4 is subject to N6,N6,N6-trimethyllysine. The substrate site is built by Asn113 and Thr163. Lys165 (proton acceptor) is an active-site residue. Lys167 provides a ligand contact to substrate. Residues Lys191, Asp193, and Glu194 each contribute to the Mg(2+) site. At Lys191 the chain carries N6-carboxylysine. The Proton acceptor role is filled by His284. 3 residues coordinate substrate: Arg285, His317, and Ser369.

This sequence belongs to the RuBisCO large chain family. Type I subfamily. Heterohexadecamer of 8 large chains and 8 small chains; disulfide-linked. The disulfide link is formed within the large subunit homodimers. Mg(2+) serves as cofactor. Post-translationally, the disulfide bond which can form in the large chain dimeric partners within the hexadecamer appears to be associated with oxidative stress and protein turnover.

The protein resides in the plastid. Its subcellular location is the chloroplast. It catalyses the reaction 2 (2R)-3-phosphoglycerate + 2 H(+) = D-ribulose 1,5-bisphosphate + CO2 + H2O. The catalysed reaction is D-ribulose 1,5-bisphosphate + O2 = 2-phosphoglycolate + (2R)-3-phosphoglycerate + 2 H(+). RuBisCO catalyzes two reactions: the carboxylation of D-ribulose 1,5-bisphosphate, the primary event in carbon dioxide fixation, as well as the oxidative fragmentation of the pentose substrate in the photorespiration process. Both reactions occur simultaneously and in competition at the same active site. This chain is Ribulose bisphosphate carboxylase large chain, found in Barleria prionitis (Porcupine flower).